The primary structure comprises 457 residues: Argininosuccinate lyase (457 aa).

This sequence belongs to the lyase 1 family. Argininosuccinate lyase subfamily.

The protein resides in the cytoplasm. The enzyme catalyses 2-(N(omega)-L-arginino)succinate = fumarate + L-arginine. It functions in the pathway amino-acid biosynthesis; L-arginine biosynthesis; L-arginine from L-ornithine and carbamoyl phosphate: step 3/3. The chain is Argininosuccinate lyase from Shigella dysenteriae serotype 1 (strain Sd197).